A 291-amino-acid polypeptide reads, in one-letter code: Small ribosomal subunit biogenesis GTPase RsgA (291 aa).

Residues His-63–Leu-221 enclose the CP-type G domain. GTP contacts are provided by residues Thr-112 to Asp-115 and Gly-164 to Thr-172. 4 residues coordinate Zn(2+): Cys-245, Cys-250, His-252, and Cys-258.

The protein belongs to the TRAFAC class YlqF/YawG GTPase family. RsgA subfamily. As to quaternary structure, monomer. Associates with 30S ribosomal subunit, binds 16S rRNA. The cofactor is Zn(2+).

It localises to the cytoplasm. In terms of biological role, one of several proteins that assist in the late maturation steps of the functional core of the 30S ribosomal subunit. Helps release RbfA from mature subunits. May play a role in the assembly of ribosomal proteins into the subunit. Circularly permuted GTPase that catalyzes slow GTP hydrolysis, GTPase activity is stimulated by the 30S ribosomal subunit. This is Small ribosomal subunit biogenesis GTPase RsgA from Staphylococcus haemolyticus (strain JCSC1435).